Reading from the N-terminus, the 227-residue chain is Phosphoribosylformylglycinamidine synthase subunit PurQ (227 aa).

Residues F3 to V225 enclose the Glutamine amidotransferase type-1 domain. The active-site Nucleophile is the C86. Residues H194 and E196 contribute to the active site.

As to quaternary structure, part of the FGAM synthase complex composed of 1 PurL, 1 PurQ and 2 PurS subunits.

It localises to the cytoplasm. It catalyses the reaction N(2)-formyl-N(1)-(5-phospho-beta-D-ribosyl)glycinamide + L-glutamine + ATP + H2O = 2-formamido-N(1)-(5-O-phospho-beta-D-ribosyl)acetamidine + L-glutamate + ADP + phosphate + H(+). The catalysed reaction is L-glutamine + H2O = L-glutamate + NH4(+). It functions in the pathway purine metabolism; IMP biosynthesis via de novo pathway; 5-amino-1-(5-phospho-D-ribosyl)imidazole from N(2)-formyl-N(1)-(5-phospho-D-ribosyl)glycinamide: step 1/2. Its function is as follows. Part of the phosphoribosylformylglycinamidine synthase complex involved in the purines biosynthetic pathway. Catalyzes the ATP-dependent conversion of formylglycinamide ribonucleotide (FGAR) and glutamine to yield formylglycinamidine ribonucleotide (FGAM) and glutamate. The FGAM synthase complex is composed of three subunits. PurQ produces an ammonia molecule by converting glutamine to glutamate. PurL transfers the ammonia molecule to FGAR to form FGAM in an ATP-dependent manner. PurS interacts with PurQ and PurL and is thought to assist in the transfer of the ammonia molecule from PurQ to PurL. In Bacillus cereus (strain 03BB102), this protein is Phosphoribosylformylglycinamidine synthase subunit PurQ.